A 336-amino-acid polypeptide reads, in one-letter code: Alpha-N-acetylgalactosaminide alpha-2,6-sialyltransferase 5 (336 aa).

Residues 1 to 8 (MKTLMRHG) lie on the Cytoplasmic side of the membrane. A helical; Signal-anchor for type II membrane protein transmembrane segment spans residues 9–29 (LAVCLALTTMCTSLLLVYSSL). Topologically, residues 30-336 (GGQKERPPQQ…INHPENKPVF (307 aa)) are lumenal. The interval 32–81 (QKERPPQQQQQQQQQQQQASATGSSQPAAESSTQQRPGVPAGPRPLDGYL) is disordered. Residues 38 to 49 (QQQQQQQQQQQQ) show a composition bias toward low complexity. The segment covering 50–67 (ASATGSSQPAAESSTQQR) has biased composition (polar residues). Cys96 and Cys245 form a disulfide bridge. 2 N-linked (GlcNAc...) asparagine glycosylation sites follow: Asn137 and Asn161.

This sequence belongs to the glycosyltransferase 29 family.

The protein localises to the golgi apparatus membrane. The enzyme catalyses a ganglioside GM1b (d18:1(4E)) + CMP-N-acetyl-beta-neuraminate = a ganglioside GD1alpha (d18:1(4E)) + CMP + H(+). The catalysed reaction is N-acetyl-alpha-neuraminosyl-(2-&gt;3)-beta-D-galactosyl-(1-&gt;3)-N-acetyl-beta-D-glucosaminyl-(1-&gt;3)-beta-D-galactosyl-(1-&gt;4)-beta-D-glucosyl-(1&lt;-&gt;1')-N-acyl-sphing-4-enine + CMP-N-acetyl-beta-neuraminate = N-acetyl-alpha-neuraminosyl-(2-&gt;3)-beta-D-galactosyl-(1-&gt;3)-[N-acetyl-alpha-neuraminosyl-(2-&gt;6)]-N-acetyl-beta-D-glucosaminyl-(1-&gt;3)-beta-D-galactosyl-(1-&gt;4)-beta-D-glucosyl-(1&lt;-&gt;1')-N-acyl-sphing-4-enine + CMP + H(+). It functions in the pathway glycolipid biosynthesis. Its function is as follows. Predominantly catalyzes the biosynthesis of ganglioside GD1alpha from GM1b in the brain, by transferring the sialyl group (N-acetyl-alpha-neuraminyl or NeuAc) from CMP-NeuAc to the GalNAc residue on the NeuAc-alpha-2,3-Gal-beta-1,3-GalNAc sequence of GM1b. GD1alpha is a critical molecule in the communication and interaction between neuronal cells and their supportive cells, particularly in brain tissues, and functions as an adhesion molecule in the process of metastasis. Also shows activity towards sialyl Lc4Cer (N-acetyl-alpha-neuraminosyl-(2-&gt;3)-beta-D-galactosyl-(1-&gt;3)-N-acetyl-beta-D-glucosaminyl-(1-&gt;3)-beta-D-galactosyl-(1-&gt;4)-beta-D-glucosyl-(1&lt;-&gt;1')-N-acyl-sphing-4-enine) generating disialyl Lc4Cer, which can lead to the synthesis of disialyl Lewis a (Le(a)), suggested to be a cancer-associated antigen. This is Alpha-N-acetylgalactosaminide alpha-2,6-sialyltransferase 5 (ST6GALNAC5) from Homo sapiens (Human).